The sequence spans 207 residues: Casparian strip membrane protein 1 (207 aa).

A compositionally biased stretch (polar residues) spans 1–12; it reads MEADSTTINVTE. Residues 1 to 20 form a disordered region; the sequence is MEADSTTINVTETPKERKGK. Residues 1 to 48 lie on the Cytoplasmic side of the membrane; sequence MEADSTTINVTETPKERKGKAPLLAAPPASSGVKRVLQKAPKGGYKRG. The chain crosses the membrane as a helical span at residues 49–69; the sequence is LAVFDVVLRLAGIATALGAAI. Topologically, residues 70-98 are extracellular; it reads AMGSTDQTLPFFTQFFQFKAEFDDLPAFT. A helical membrane pass occupies residues 99–119; the sequence is FFVIANAITAAYLALTIPISI. At 120–131 the chain is on the cytoplasmic side; it reads VCIIRPHLVAPR. A helical transmembrane segment spans residues 132-152; that stretch reads VLLIFLDTVMVALTTAAAGGT. Residues 153 to 184 lie on the Extracellular side of the membrane; sequence ASIVYLAHNGNSDANWPAICQQFNDXCQKVSG. Residues 185–205 form a helical membrane-spanning segment; that stretch reads AVVASFLTVVVLMLLIVLSAF. Over 206-207 the chain is Cytoplasmic; the sequence is AL.

This sequence belongs to the Casparian strip membrane proteins (CASP) family. As to quaternary structure, homodimer and heterodimers.

The protein resides in the cell membrane. Regulates membrane-cell wall junctions and localized cell wall deposition. Required for establishment of the Casparian strip membrane domain (CSD) and the subsequent formation of Casparian strips, a cell wall modification of the root endodermis that determines an apoplastic barrier between the intraorganismal apoplasm and the extraorganismal apoplasm and prevents lateral diffusion. The polypeptide is Casparian strip membrane protein 1 (Cynara cardunculus var. scolymus (Globe artichoke)).